The sequence spans 936 residues: Periplasmic nitrate reductase (936 aa).

The segment at residues 1–31 (MALSRRDFLKSSAAAAAASAVGLSVPKEVEA) is a signal peptide (tat-type signal). The region spanning 40-96 (WRWDKAVCRFCGTGCGIMIATKDDRIVAVKGDPLAPVNRGLNCIKGYFTAKIMYGAD) is the 4Fe-4S Mo/W bis-MGD-type domain. Residues C47, C50, C54, and C82 each coordinate [4Fe-4S] cluster. Residues K84, Q152, N177, C181, 214–221 (WGSNMAEM), 246–250 (STYTH), M424, Q428, N534, 559–560 (SD), K582, D609, and 826–835 (TGRVLEHWHS) each bind Mo-bis(molybdopterin guanine dinucleotide). W902 serves as a coordination point for substrate. Mo-bis(molybdopterin guanine dinucleotide)-binding residues include N910 and K927.

Belongs to the prokaryotic molybdopterin-containing oxidoreductase family. NasA/NapA/NarB subfamily. In terms of assembly, component of the periplasmic nitrate reductase NapAB complex composed of NapA and NapB. [4Fe-4S] cluster serves as cofactor. It depends on Mo-bis(molybdopterin guanine dinucleotide) as a cofactor. In terms of processing, predicted to be exported by the Tat system. The position of the signal peptide cleavage has not been experimentally proven.

Its subcellular location is the periplasm. It catalyses the reaction 2 Fe(II)-[cytochrome] + nitrate + 2 H(+) = 2 Fe(III)-[cytochrome] + nitrite + H2O. Functionally, catalytic subunit of the periplasmic nitrate reductase complex NapAB. Receives electrons from NapB and catalyzes the reduction of nitrate to nitrite. This Nitratiruptor sp. (strain SB155-2) protein is Periplasmic nitrate reductase.